We begin with the raw amino-acid sequence, 676 residues long: DNA-directed RNA polymerase subunit beta' (676 aa).

Zn(2+) contacts are provided by cysteine 69, cysteine 71, cysteine 87, and cysteine 90. Residues aspartate 485, aspartate 487, and aspartate 489 each coordinate Mg(2+).

The protein belongs to the RNA polymerase beta' chain family. RpoC1 subfamily. In terms of assembly, in plastids the minimal PEP RNA polymerase catalytic core is composed of four subunits: alpha, beta, beta', and beta''. When a (nuclear-encoded) sigma factor is associated with the core the holoenzyme is formed, which can initiate transcription. It depends on Mg(2+) as a cofactor. Requires Zn(2+) as cofactor.

The protein resides in the plastid. The protein localises to the chloroplast. It carries out the reaction RNA(n) + a ribonucleoside 5'-triphosphate = RNA(n+1) + diphosphate. DNA-dependent RNA polymerase catalyzes the transcription of DNA into RNA using the four ribonucleoside triphosphates as substrates. The sequence is that of DNA-directed RNA polymerase subunit beta' from Fagopyrum esculentum subsp. ancestrale (Wild buckwheat).